Reading from the N-terminus, the 443-residue chain is tRNA modification GTPase MnmE (443 aa).

Residues Arg23, Glu81, and Lys119 each coordinate (6S)-5-formyl-5,6,7,8-tetrahydrofolate. In terms of domain architecture, TrmE-type G spans 214–369 (GMRVAILGKP…LLSALKERAI (156 aa)). GTP is bound by residues 224–229 (NVGKST), 243–249 (SEYPGTT), and 268–271 (DTAG). Residues Ser228 and Thr249 each coordinate Mg(2+). Position 443 (Lys443) interacts with (6S)-5-formyl-5,6,7,8-tetrahydrofolate.

It belongs to the TRAFAC class TrmE-Era-EngA-EngB-Septin-like GTPase superfamily. TrmE GTPase family. Homodimer. Heterotetramer of two MnmE and two MnmG subunits. K(+) serves as cofactor.

The protein resides in the cytoplasm. Its function is as follows. Exhibits a very high intrinsic GTPase hydrolysis rate. Involved in the addition of a carboxymethylaminomethyl (cmnm) group at the wobble position (U34) of certain tRNAs, forming tRNA-cmnm(5)s(2)U34. The protein is tRNA modification GTPase MnmE of Anaplasma marginale (strain St. Maries).